Reading from the N-terminus, the 1481-residue chain is Cystic fibrosis transmembrane conductance regulator (1481 aa).

Over 1-77 the chain is Cytoplasmic; it reads MQRSPLEKAS…KLINALRRCF (77 aa). A helical membrane pass occupies residues 78–98; that stretch reads FWRFMFYGIILYLGEVTKAVQ. Positions 81–365 constitute an ABC transmembrane type-1 1 domain; the sequence is FMFYGIILYL…WAVQTWYDSL (285 aa). Residues 99–122 lie on the Extracellular side of the membrane; sequence PLLLGRIIASYDPDNKVERSIAIY. A helical transmembrane segment spans residues 123–146; sequence LGIGLCLLFIVRTLLLHPAIFGLH. Residues 147–195 lie on the Cytoplasmic side of the membrane; that stretch reads HIGMQMRIAMFSLIYKKTLKLSSRVLDKISIGQLVSLLSNNLNKFDEGL. Residues 196–216 traverse the membrane as a helical segment; that stretch reads ALAHFVWIAPLQVTLLMGLLW. The Extracellular portion of the chain corresponds to 217 to 222; the sequence is DLLQAF. The chain crosses the membrane as a helical span at residues 223–243; sequence TFCGLAFLVVLALLQAGLGKM. Topologically, residues 244–298 are cytoplasmic; it reads MMKYRDQRAGKINERLVITSEMIENIQSVKAYCWEEAMEKIIENLRQTELKLTRK. Residues 299 to 319 form a helical membrane-spanning segment; sequence AAYVRYLNSSAFFFSGFFVVF. Residues 320 to 339 are Extracellular-facing; it reads LSVLPYALLKGIILRKIFTT. A helical transmembrane segment spans residues 340–358; it reads ISFCIVLRMAVTRQFPWAV. The Cytoplasmic segment spans residues 359–858; the sequence is QTWYDSLGAI…YLRYITVHKS (500 aa). Residues W401, 457–464, and Q492 each bind ATP; that span reads GSTGAGKT. The ABC transporter 1 domain maps to 421-645; it reads ISNCDTSLFF…RPDFSSKLMG (225 aa). A lipid anchor (S-palmitoyl cysteine) is attached at C523. Phosphoserine is present on residues S548 and S659. The disordered R region stretch occupies residues 653 to 831; the sequence is TAERRNSIIT…EEINEEDLRD (179 aa). S669 bears the Phosphoserine; by PKA mark. S685 carries the phosphoserine modification. K687 is covalently cross-linked (Glycyl lysine isopeptide (Lys-Gly) (interchain with G-Cter in ubiquitin)). A phosphoserine mark is found at S699 and S711. The residue at position 716 (T716) is a Phosphothreonine. A phosphoserine mark is found at S736, S767, S790, S795, and S813. The chain crosses the membrane as a helical span at residues 859–879; the sequence is LMFVLIWCLVVFLVEVAASLV. Residues 859 to 1155 enclose the ABC transmembrane type-1 2 domain; that stretch reads LMFVLIWCLV…AVNSSIDVDS (297 aa). The Extracellular portion of the chain corresponds to 880-918; it reads VLCLFPKILLQDKGNSTKNASNSYAVIITSTSSYYIFYI. Residues N894 and N898 are each glycosylated (N-linked (GlcNAc...) asparagine). The chain crosses the membrane as a discontinuously helical span at residues 919 to 939; that stretch reads YVGVADTLLALGLFRGLPLVH. Residues 940–990 lie on the Cytoplasmic side of the membrane; sequence TLITVSKTLHHKMLQSVLQAPMSTLNTLKTGGILNRFSKDIAVLDDLLPLT. The helical transmembrane segment at 991–1011 threads the bilayer; sequence IFDFIQLLLIVIGAVVVVSVL. At 1012-1013 the chain is on the extracellular side; it reads QP. The chain crosses the membrane as a helical span at residues 1014–1034; sequence YIFLATVPVIAAFILLRGYFL. The Cytoplasmic portion of the chain corresponds to 1035-1095; that stretch reads HTSQQLKQLE…TANWFLYLST (61 aa). The helical transmembrane segment at 1096–1116 threads the bilayer; the sequence is LRWFQMRIEMIFVIFFIAVTF. Residues 1117 to 1130 are Extracellular-facing; that stretch reads ISILTTGEGEGRVG. The chain crosses the membrane as a helical span at residues 1131–1151; it reads IILTLAMNIMGTLQWAVNSSI. Topologically, residues 1152 to 1481 are cytoplasmic; sequence DVDSLMRSVS…TEEEVQETKL (330 aa). The ABC transporter 2 domain maps to 1211 to 1444; that stretch reads MTVKDLTAKY…KSLFRQAISP (234 aa). ATP contacts are provided by residues Y1220 and 1245–1252; that span reads GRTGSGKS. The tract at residues 1387–1481 is interaction with GORASP2; it reads RTLKQAFADC…TEEEVQETKL (95 aa). C1396 carries S-palmitoyl cysteine lipidation. S1457 is modified (phosphoserine). The PDZ-binding motif lies at 1479 to 1481; it reads TKL.

The protein belongs to the ABC transporter superfamily. ABCC family. CFTR transporter (TC 3.A.1.202) subfamily. As to quaternary structure, monomer; does not require oligomerization for channel activity. May form oligomers in the membrane. Interacts with SLC26A3, SLC26A6 and NHERF1. Interacts with SHANK2. Interacts with MYO6. Interacts (via C-terminus) with GOPC (via PDZ domain); this promotes CFTR internalization and thereby decreases channel activity. Interacts with SLC4A7 through NHERF1. Found in a complex with MYO5B and RAB11A. Interacts with ANO1. Interacts with SLC26A8. Interacts with AHCYL1; the interaction increases CFTR activity. Interacts with CSE1L. The core-glycosylated form interacts with GORASP2 (via PDZ GRASP-type 1 domain) in respone to ER stress. Interacts with MARCHF2; the interaction leads to CFTR ubiqtuitination and degradation. Interacts with ADGRG2. N-glycosylated. Post-translationally, phosphorylated; cAMP treatment promotes phosphorylation and activates the channel. Dephosphorylation decreases the ATPase activity (in vitro). Phosphorylation at PKA sites activates the channel. Phosphorylation at PKC sites enhances the response to phosphorylation by PKA. Phosphorylated by AMPK; this inhibits channel activity. In terms of processing, ubiquitinated, leading to its degradation in the lysosome. Deubiquitination by USP10 in early endosomes enhances its endocytic recycling to the cell membrane. Ubiquitinated by RNF185 during ER stress. Ubiquitinated by MARCHF2.

It is found in the apical cell membrane. The protein localises to the early endosome membrane. It localises to the cell membrane. The protein resides in the recycling endosome membrane. Its subcellular location is the endoplasmic reticulum membrane. It is found in the nucleus. The enzyme catalyses ATP + H2O + closed Cl(-) channel = ADP + phosphate + open Cl(-) channel.. It carries out the reaction chloride(in) = chloride(out). It catalyses the reaction hydrogencarbonate(in) = hydrogencarbonate(out). The catalysed reaction is ATP + H2O = ADP + phosphate + H(+). Epithelial ion channel that plays an important role in the regulation of epithelial ion and water transport and fluid homeostasis. Mediates the transport of chloride ions across the cell membrane. Possesses an intrinsic ATPase activity and utilizes ATP to gate its channel; the passive flow of anions through the channel is gated by cycles of ATP binding and hydrolysis by the ATP-binding domains. The ion channel is also permeable to HCO(3)(-); selectivity depends on the extracellular chloride concentration. Exerts its function also by modulating the activity of other ion channels and transporters. Contributes to the regulation of the pH and the ion content of the epithelial fluid layer. Modulates the activity of the epithelial sodium channel (ENaC) complex, in part by regulating the cell surface expression of the ENaC complex. May regulate bicarbonate secretion and salvage in epithelial cells by regulating the transporter SLC4A7. Can inhibit the chloride channel activity of ANO1. Plays a role in the chloride and bicarbonate homeostasis during sperm epididymal maturation and capacitation. This is Cystic fibrosis transmembrane conductance regulator from Ovis aries (Sheep).